We begin with the raw amino-acid sequence, 682 residues long: DNA-directed RNA polymerase subunit beta' (682 aa).

Zn(2+) contacts are provided by Cys-69, Cys-71, Cys-87, and Cys-90. Mg(2+)-binding residues include Asp-489, Asp-491, and Asp-493.

The protein belongs to the RNA polymerase beta' chain family. RpoC1 subfamily. In plastids the minimal PEP RNA polymerase catalytic core is composed of four subunits: alpha, beta, beta', and beta''. When a (nuclear-encoded) sigma factor is associated with the core the holoenzyme is formed, which can initiate transcription. The cofactor is Mg(2+). Zn(2+) is required as a cofactor.

It is found in the plastid. The protein resides in the chloroplast. The catalysed reaction is RNA(n) + a ribonucleoside 5'-triphosphate = RNA(n+1) + diphosphate. In terms of biological role, DNA-dependent RNA polymerase catalyzes the transcription of DNA into RNA using the four ribonucleoside triphosphates as substrates. This is DNA-directed RNA polymerase subunit beta' from Oryza nivara (Indian wild rice).